We begin with the raw amino-acid sequence, 993 residues long: NACHT, LRR and PYD domains-containing protein 14 (993 aa).

In terms of domain architecture, NACHT spans 81-403; the sequence is QTVVLQGAAG…FYLLRENLEE (323 aa). 87 to 94 is a binding site for ATP; it reads GAAGIGKT. 9 LRR repeats span residues 636–657, 660–680, 688–708, 717–738, 745–765, 774–795, 802–822, 831–852, and 859–879; these read DLKETDLGVNGLKTLCEALKCK, KLRVLRLASCDLNVARCQKLS, SLVFLNLSLNNLSNDGVKSLC, SLERLALASCGLTKAGCKVLSS, RLTHLCLSDNVLEDEGIKLLS, TLQSLVLRSCSFTPIGSEHLST, SLVHLDLGQNKLADNGVKLLC, NLQELELMSCVLTSKACGDLAS, and NLWSLDLGHNILDDAGLNILC.

This sequence belongs to the NLRP family. As to expression, detected in adult ovary and testis. Detected in oocytes and in germ cell elements in seminiferous tubules in adult testis (at protein level).

It is found in the cytoplasm. Functionally, may be involved in inflammation and spermatogenesis. The sequence is that of NACHT, LRR and PYD domains-containing protein 14 (Nlrp14) from Mus musculus (Mouse).